We begin with the raw amino-acid sequence, 238 residues long: Thrombin-like enzyme AhV_TL-I (238 aa).

Residues 1 to 229 (IIGGDECNIN…HLDWIENIIA (229 aa)) enclose the Peptidase S1 domain. Intrachain disulfides connect C7/C141, C28/C44, C76/C236, C120/C190, C152/C169, and C180/C205. H43 functions as the Charge relay system in the catalytic mechanism. The N-linked (GlcNAc...) asparagine glycan is linked to N81. D88 functions as the Charge relay system in the catalytic mechanism. The Charge relay system role is filled by S184.

This sequence belongs to the peptidase S1 family. Snake venom subfamily. In terms of assembly, monomer. Post-translationally, N-glycosylated at Asn-81 by a disaccharide composed of two N-acetylglucosamine (NAG). The presence of this N-glycan deforms the enzyme and Removing the carbohydrate moiety increases the esterase activity, but induces a complete loss of contractile response on mouse thoracic aorta. As to expression, expressed by the venom gland.

It is found in the secreted. With respect to regulation, inhibited by PMSF, L-cysteine and partially by SBTI and leupeptin. Functionally, thrombin-like enzyme that shows fibrinogenolytic activity against both the Aalpha (FGA) and Bbeta (FGB) chains of bovine fibrinogen. This enzyme has poor esterolytic activity upon BAEE substrate. It induces mouse thoracic aortic ring contraction with EC(50)=147 nmol/L. It shows vasoconstrictor effects that are independent of the enzymatic activity, but related to the release of calcium ions form the calcium store, potentially through the activation of ryanodine receptors. The protein is Thrombin-like enzyme AhV_TL-I of Gloydius halys (Chinese water mocassin).